We begin with the raw amino-acid sequence, 78 residues long: Omega-conotoxin PnVIA (78 aa).

A signal peptide spans 1 to 22 (MKLTCMMIIAVLFLTAWTFVMA). Positions 23–45 (DDPRDEPEARDEMNPAASKLNER) are excised as a propeptide. Disulfide bonds link C47-C65, C54-C69, and C64-C73. Q76 is subject to Glutamine amide.

Expressed by the venom duct.

It is found in the secreted. Functionally, omega-conotoxins act at presynaptic membranes, they bind and block voltage-gated calcium channels (Cav). Acts on high voltage-activated (HVA) calcium currents in molluscan neurons. The sequence is that of Omega-conotoxin PnVIA from Conus pennaceus (Feathered cone).